We begin with the raw amino-acid sequence, 210 residues long: Large ribosomal subunit protein uL15 (210 aa).

Disordered stretches follow at residues 1–64 (MADD…AAPR) and 76–104 (AAGA…TKGT). Low complexity predominate over residues 9-54 (EAAAKPVAEKATATALAKKAPAKAAAADKAAPAAKGETVAAKPAKA). Residues 79-93 (AKKEKTRVGRGEGSK) show a composition bias toward basic and acidic residues.

This sequence belongs to the universal ribosomal protein uL15 family. Part of the 50S ribosomal subunit.

Its function is as follows. Binds to the 23S rRNA. The chain is Large ribosomal subunit protein uL15 from Leifsonia xyli subsp. xyli (strain CTCB07).